Here is a 352-residue protein sequence, read N- to C-terminus: 4-hydroxy-2-oxovalerate aldolase (352 aa).

Residues 14–266 (VRMTDTSLRD…KTGIDFFDIA (253 aa)) form the Pyruvate carboxyltransferase domain. 22 to 23 (RD) contributes to the substrate binding site. Residue Asp23 participates in Mn(2+) binding. Catalysis depends on His26, which acts as the Proton acceptor. Positions 176 and 205 each coordinate substrate. Positions 205 and 207 each coordinate Mn(2+). Tyr296 contributes to the substrate binding site.

Belongs to the 4-hydroxy-2-oxovalerate aldolase family.

The enzyme catalyses (S)-4-hydroxy-2-oxopentanoate = acetaldehyde + pyruvate. The sequence is that of 4-hydroxy-2-oxovalerate aldolase from Mycolicibacterium gilvum (strain PYR-GCK) (Mycobacterium gilvum (strain PYR-GCK)).